The sequence spans 793 residues: Potassium transporter 18 (793 aa).

The Cytoplasmic portion of the chain corresponds to Met-1 to Ser-53. A helical transmembrane segment spans residues Leu-54–Pro-74. At His-75–Ala-86 the chain is on the extracellular side. Residues Leu-87 to Leu-107 form a helical membrane-spanning segment. At Arg-108–Asn-172 the chain is on the cytoplasmic side. The helical transmembrane segment at Leu-173–Pro-193 threads the bilayer. The Extracellular portion of the chain corresponds to Ala-194–Asp-214. Residues Val-215–Thr-235 traverse the membrane as a helical segment. Over Asp-236 to Lys-237 the chain is Cytoplasmic. A helical membrane pass occupies residues Val-238–Ala-258. Residues Val-259–Ser-287 lie on the Extracellular side of the membrane. The helical transmembrane segment at Trp-288 to Leu-308 threads the bilayer. Residue Ser-309 is a topological domain, cytoplasmic. Residues Tyr-310–Leu-330 form a helical membrane-spanning segment. The Extracellular portion of the chain corresponds to Gln-331–Tyr-351. Residues Ile-352–Val-372 form a helical membrane-spanning segment. Residues Ala-373–Gln-409 are Cytoplasmic-facing. The helical transmembrane segment at Ile-410–Phe-430 threads the bilayer. Residues Lys-431–Thr-442 lie on the Extracellular side of the membrane. Asn-432 carries N-linked (GlcNAc...) asparagine glycosylation. Residues Ala-443–Trp-463 traverse the membrane as a helical segment. Residues Arg-464–Thr-468 are Cytoplasmic-facing. A helical membrane pass occupies residues Leu-469–Val-489. Over Arg-490–Gln-494 the chain is Extracellular. Residues Gly-495 to Tyr-515 form a helical membrane-spanning segment. Topologically, residues Gly-516–Val-793 are cytoplasmic.

The protein belongs to the HAK/KUP transporter (TC 2.A.72.3) family.

It localises to the membrane. In terms of biological role, high-affinity potassium transporter. This is Potassium transporter 18 (HAK18) from Oryza sativa subsp. japonica (Rice).